Consider the following 382-residue polypeptide: Ribosomal RNA large subunit methyltransferase G (382 aa).

Belongs to the methyltransferase superfamily. RlmG family.

Its subcellular location is the cytoplasm. The enzyme catalyses guanosine(1835) in 23S rRNA + S-adenosyl-L-methionine = N(2)-methylguanosine(1835) in 23S rRNA + S-adenosyl-L-homocysteine + H(+). Functionally, specifically methylates the guanine in position 1835 (m2G1835) of 23S rRNA. This Aliivibrio salmonicida (strain LFI1238) (Vibrio salmonicida (strain LFI1238)) protein is Ribosomal RNA large subunit methyltransferase G.